The chain runs to 283 residues: Thymidylate synthase (283 aa).

Arginine 22 is a dUMP binding site. The active-site Nucleophile is cysteine 160. Residues 180-183, asparagine 191, and 221-223 contribute to the dUMP site; these read RSCD and HIY. (6R)-5,10-methylene-5,6,7,8-tetrahydrofolate is bound at residue aspartate 183. Residue serine 282 participates in (6R)-5,10-methylene-5,6,7,8-tetrahydrofolate binding.

It belongs to the thymidylate synthase family. Bacterial-type ThyA subfamily. Homodimer.

It localises to the cytoplasm. The catalysed reaction is dUMP + (6R)-5,10-methylene-5,6,7,8-tetrahydrofolate = 7,8-dihydrofolate + dTMP. It functions in the pathway pyrimidine metabolism; dTTP biosynthesis. Functionally, catalyzes the reductive methylation of 2'-deoxyuridine-5'-monophosphate (dUMP) to 2'-deoxythymidine-5'-monophosphate (dTMP) while utilizing 5,10-methylenetetrahydrofolate (mTHF) as the methyl donor and reductant in the reaction, yielding dihydrofolate (DHF) as a by-product. This enzymatic reaction provides an intracellular de novo source of dTMP, an essential precursor for DNA biosynthesis. This is Thymidylate synthase from Pseudoalteromonas translucida (strain TAC 125).